A 279-amino-acid chain; its full sequence is MSEPNAIVKVGNIIFSNEAPFSLIAGPCQIESRDHAFEMAGRIKTITDQVGIGFVYKSSYDKANRTSLSAVRGVGLENAMAIFSDLKKEFGCPILTDVHTEEQCTVVASTVDILQIPAFLCRQTDLLVAAAKTGRVINIKKGQFLAPWDMKNVLRKVTQSGNRNVMLCERGTSFGYNRLISDMRSLPILRSFGAPVIFDATHSVQEPGGQGDSSGGQRQFVEILARAAVSVGVAGIFLETHQDPDNAPSDGPNMIKIDHLQRLLETLMEFDYLSKKTIE.

This sequence belongs to the KdsA family.

The protein localises to the cytoplasm. It catalyses the reaction D-arabinose 5-phosphate + phosphoenolpyruvate + H2O = 3-deoxy-alpha-D-manno-2-octulosonate-8-phosphate + phosphate. Its pathway is carbohydrate biosynthesis; 3-deoxy-D-manno-octulosonate biosynthesis; 3-deoxy-D-manno-octulosonate from D-ribulose 5-phosphate: step 2/3. The protein operates within bacterial outer membrane biogenesis; lipopolysaccharide biosynthesis. The protein is 2-dehydro-3-deoxyphosphooctonate aldolase of Bartonella henselae (strain ATCC 49882 / DSM 28221 / CCUG 30454 / Houston 1) (Rochalimaea henselae).